The following is a 127-amino-acid chain: Fluoride-specific ion channel FluC (127 aa).

4 helical membrane-spanning segments follow: residues 4–24 (LLLA…LLSM), 35–55 (LGTL…FAWF), 71–91 (TGFC…VFLL), and 103–123 (VFVN…LFSA). Positions 75 and 78 each coordinate Na(+).

The protein belongs to the fluoride channel Fluc/FEX (TC 1.A.43) family.

The protein resides in the cell inner membrane. It carries out the reaction fluoride(in) = fluoride(out). Na(+) is not transported, but it plays an essential structural role and its presence is essential for fluoride channel function. In terms of biological role, fluoride-specific ion channel. Important for reducing fluoride concentration in the cell, thus reducing its toxicity. This chain is Fluoride-specific ion channel FluC, found in Shigella flexneri serotype 5b (strain 8401).